The chain runs to 177 residues: Ribulose bisphosphate carboxylase small subunit, chloroplastic 2 (177 aa).

Residues 1 to 56 (MASSMMASTAAVARAGPAQSNMVAPFNGLRSSVAFPATRKANKNLSTLPSNGGKVS) constitute a chloroplast transit peptide.

Belongs to the RuBisCO small chain family. As to quaternary structure, heterohexadecamer of 8 large and 8 small subunits.

It localises to the plastid. The protein localises to the chloroplast. RuBisCO catalyzes two reactions: the carboxylation of D-ribulose 1,5-bisphosphate, the primary event in carbon dioxide fixation, as well as the oxidative fragmentation of the pentose substrate. Both reactions occur simultaneously and in competition at the same active site. Although the small subunit is not catalytic it is essential for maximal activity. The protein is Ribulose bisphosphate carboxylase small subunit, chloroplastic 2 of Lemna gibba (Swollen duckweed).